Reading from the N-terminus, the 265-residue chain is Probable cyclic nucleotide phosphodiesterase SynWH7803_1390 (265 aa).

Positions 9, 11, 49, 86, 157, 196, and 198 each coordinate Fe cation. Residues His11, Asp49, and Asn86 to His87 each bind AMP. Position 198 (His198) interacts with AMP.

This sequence belongs to the cyclic nucleotide phosphodiesterase class-III family. Requires Fe(2+) as cofactor.

This is Probable cyclic nucleotide phosphodiesterase SynWH7803_1390 from Synechococcus sp. (strain WH7803).